A 357-amino-acid chain; its full sequence is Peptide chain release factor 1 (357 aa).

Residue glutamine 232 is modified to N5-methylglutamine.

The protein belongs to the prokaryotic/mitochondrial release factor family. In terms of processing, methylated by PrmC. Methylation increases the termination efficiency of RF1.

It localises to the cytoplasm. Functionally, peptide chain release factor 1 directs the termination of translation in response to the peptide chain termination codons UAG and UAA. This is Peptide chain release factor 1 from Nitratidesulfovibrio vulgaris (strain ATCC 29579 / DSM 644 / CCUG 34227 / NCIMB 8303 / VKM B-1760 / Hildenborough) (Desulfovibrio vulgaris).